The chain runs to 263 residues: HTH-type transcriptional repressor NanR (263 aa).

Residues 1–22 (MGLMNAFDSQTEDSSPAIGRNL) are disordered. In terms of domain architecture, HTH gntR-type spans 30 to 98 (KKLSEMVEEE…NGERARVSRP (69 aa)). The segment at residues 58–77 (ERELMAFFNVGRPSVREALA) is a DNA-binding region (H-T-H motif).

Belongs to the NanR family.

Transcriptional repressor that controls expression of the genes required for the catabolism of sialic acids. The protein is HTH-type transcriptional repressor NanR of Shigella sonnei (strain Ss046).